The primary structure comprises 235 residues: ATP-dependent dethiobiotin synthetase BioD (235 aa).

Position 12–17 (12–17) interacts with ATP; that stretch reads GVGKTF. Residue T16 coordinates Mg(2+). Residue K37 is part of the active site. S41 is a binding site for substrate. ATP contacts are provided by residues D51, 112 to 115, and 202 to 204; these read EGAG and PKL. D51 and E112 together coordinate Mg(2+).

The protein belongs to the dethiobiotin synthetase family. As to quaternary structure, homodimer. It depends on Mg(2+) as a cofactor.

Its subcellular location is the cytoplasm. It catalyses the reaction (7R,8S)-7,8-diammoniononanoate + CO2 + ATP = (4R,5S)-dethiobiotin + ADP + phosphate + 3 H(+). Its pathway is cofactor biosynthesis; biotin biosynthesis; biotin from 7,8-diaminononanoate: step 1/2. In terms of biological role, catalyzes a mechanistically unusual reaction, the ATP-dependent insertion of CO2 between the N7 and N8 nitrogen atoms of 7,8-diaminopelargonic acid (DAPA, also called 7,8-diammoniononanoate) to form a ureido ring. The protein is ATP-dependent dethiobiotin synthetase BioD of Bacillus licheniformis (strain ATCC 14580 / DSM 13 / JCM 2505 / CCUG 7422 / NBRC 12200 / NCIMB 9375 / NCTC 10341 / NRRL NRS-1264 / Gibson 46).